The primary structure comprises 209 residues: Large ribosomal subunit protein bL25 (209 aa).

Belongs to the bacterial ribosomal protein bL25 family. CTC subfamily. Part of the 50S ribosomal subunit; part of the 5S rRNA/L5/L18/L25 subcomplex. Contacts the 5S rRNA. Binds to the 5S rRNA independently of L5 and L18.

In terms of biological role, this is one of the proteins that binds to the 5S RNA in the ribosome where it forms part of the central protuberance. In Xanthomonas campestris pv. campestris (strain B100), this protein is Large ribosomal subunit protein bL25.